Consider the following 427-residue polypeptide: Inward rectifier potassium channel 2 (427 aa).

Residues 1–81 lie on the Cytoplasmic side of the membrane; it reads MGSVRTNRYS…IFTTCVDIRW (81 aa). At Cys-76 the chain carries S-nitrosocysteine. Residues 82–106 form a helical membrane-spanning segment; that stretch reads RWMLVIFCLAFVLSWLFFGCVFWLI. At 107-128 the chain is on the extracellular side; that stretch reads ALLHGDLDASRESKACVSEVNS. An intramembrane region (helical; Pore-forming) is located at residues 129–140; it reads FTAAFLFSIETQ. The pore-forming intramembrane region spans 141 to 147; that stretch reads TTIGYGF. Residues 142-147 carry the Selectivity filter motif; the sequence is TIGYGF. Over 148–156 the chain is Extracellular; that stretch reads RCVTDECPV. Residues 157 to 178 traverse the membrane as a helical segment; sequence AVFMVVFQSIVGCIIDAFIIGA. Residues 179–427 are Cytoplasmic-facing; sequence VMAKMAKPKK…PRPLRRESEI (249 aa). A polyphosphoinositide (PIP2)-binding region spans residues 181–208; sequence AKMAKPKKRNETLVFSHNAVIAMRDGKL. A disordered region spans residues 384-427; the sequence is SKEEDDSENGVPESTSTDTPPDIDLHNQASVPLEPRPLRRESEI. Positions 425–427 match the PDZ-binding motif; sequence SEI.

It belongs to the inward rectifier-type potassium channel (TC 1.A.2.1) family. KCNJ2 subfamily. Homotetramer. Homomultimeric and heteromultimeric association with KCNJ4/Kir2.3. Can form heteromeric channels with Kir2.6/KCNJ18. Associates, via its PDZ-recognition domain, with a complex containing LIN7A, LIN7B, LIN7C, DLG1, CASK and APBA1. Post-translationally, S-nitrosylation increases the open probability and inward rectifying currents. Highly expressed in the ventricle and skeletal muscle, moderately in cerebrum and cerebellum. Only low levels are detected in kidney or lung.

The protein resides in the cell membrane. Its subcellular location is the sarcolemma. It localises to the T-tubule. The catalysed reaction is K(+)(in) = K(+)(out). Its activity is regulated as follows. Activated by phosphatidylinositol 4,5 biphosphate (PtdIns(4,5)P2). In terms of biological role, inward rectifier potassium channels are characterized by a greater tendency to allow potassium to flow into the cell rather than out of it. Their voltage dependence is regulated by the concentration of extracellular potassium; as external potassium is raised, the voltage range of the channel opening shifts to more positive voltages. The inward rectification is mainly due to the blockage of outward current by internal magnesium. Can be blocked by extracellular barium and cesium. Probably participates in establishing action potential waveform and excitability of neuronal and muscle tissues. The polypeptide is Inward rectifier potassium channel 2 (KCNJ2) (Oryctolagus cuniculus (Rabbit)).